A 570-amino-acid chain; its full sequence is Formate--tetrahydrofolate ligase (570 aa).

Residue 65-72 (TPHGEGKT) participates in ATP binding.

It belongs to the formate--tetrahydrofolate ligase family.

The enzyme catalyses (6S)-5,6,7,8-tetrahydrofolate + formate + ATP = (6R)-10-formyltetrahydrofolate + ADP + phosphate. It functions in the pathway one-carbon metabolism; tetrahydrofolate interconversion. This chain is Formate--tetrahydrofolate ligase, found in Shewanella sp. (strain ANA-3).